A 247-amino-acid polypeptide reads, in one-letter code: Chymase (247 aa).

Residues methionine 1–alanine 19 form the signal peptide. The propeptide at glycine 20–glutamate 21 is activation peptide. Positions isoleucine 22–arginine 245 constitute a Peptidase S1 domain. A disulfide bond links cysteine 51 and cysteine 67. Catalysis depends on histidine 66, which acts as the Charge relay system. The N-linked (GlcNAc...) asparagine glycan is linked to asparagine 80. The active-site Charge relay system is aspartate 110. 2 disulfides stabilise this stretch: cysteine 144/cysteine 209 and cysteine 175/cysteine 188. Serine 203 (charge relay system) is an active-site residue.

This sequence belongs to the peptidase S1 family. Granzyme subfamily. As to expression, mast cells.

The protein resides in the secreted. The protein localises to the cytoplasmic granule. The enzyme catalyses Preferential cleavage: Phe-|-Xaa &gt; Tyr-|-Xaa &gt; Trp-|-Xaa &gt; Leu-|-Xaa.. Functionally, major secreted protease of mast cells with suspected roles in vasoactive peptide generation, extracellular matrix degradation, and regulation of gland secretion. The sequence is that of Chymase (Cma1) from Mus musculus (Mouse).